A 230-amino-acid polypeptide reads, in one-letter code: Cytidylate kinase (230 aa).

Position 17-25 (17-25 (GPTASGKGT)) interacts with ATP.

The protein belongs to the cytidylate kinase family. Type 1 subfamily.

Its subcellular location is the cytoplasm. It catalyses the reaction CMP + ATP = CDP + ADP. It carries out the reaction dCMP + ATP = dCDP + ADP. The chain is Cytidylate kinase from Ralstonia nicotianae (strain ATCC BAA-1114 / GMI1000) (Ralstonia solanacearum).